Reading from the N-terminus, the 511-residue chain is Lysine--tRNA ligase (511 aa).

E422 and E429 together coordinate Mg(2+).

The protein belongs to the class-II aminoacyl-tRNA synthetase family. As to quaternary structure, homodimer. Mg(2+) is required as a cofactor.

It localises to the cytoplasm. It catalyses the reaction tRNA(Lys) + L-lysine + ATP = L-lysyl-tRNA(Lys) + AMP + diphosphate. The chain is Lysine--tRNA ligase from Chlorobaculum tepidum (strain ATCC 49652 / DSM 12025 / NBRC 103806 / TLS) (Chlorobium tepidum).